A 397-amino-acid polypeptide reads, in one-letter code: Argininosuccinate synthase (397 aa).

8 to 16 (AYSGGLDTS) is an ATP binding site. L-citrulline-binding residues include Tyr-86 and Ser-91. Gly-116 serves as a coordination point for ATP. L-aspartate-binding residues include Thr-118, Asn-122, and Asp-123. Asn-122 contributes to the L-citrulline binding site. 5 residues coordinate L-citrulline: Arg-126, Ser-175, Ser-184, Glu-260, and Tyr-272.

The protein belongs to the argininosuccinate synthase family. Type 1 subfamily. Homotetramer.

It is found in the cytoplasm. It carries out the reaction L-citrulline + L-aspartate + ATP = 2-(N(omega)-L-arginino)succinate + AMP + diphosphate + H(+). The protein operates within amino-acid biosynthesis; L-arginine biosynthesis; L-arginine from L-ornithine and carbamoyl phosphate: step 2/3. The polypeptide is Argininosuccinate synthase (Clostridium botulinum (strain 657 / Type Ba4)).